A 219-amino-acid chain; its full sequence is DnaJ homolog subfamily C member 30, mitochondrial (219 aa).

A mitochondrion-targeting transit peptide spans 1-38 (MAAARCLGWTLSPLWRWWQVRGLPPSSATGLCSRGRTY). Residues 42-107 (ALYELLGVPS…ILRRKYDRGL (66 aa)) enclose the J domain. Residues 109-148 (SDQDLRGPGVKPSKTPVADPAPPRPPPYTPRAPGGSRASP) are disordered. Over residues 127–138 (DPAPPRPPPYTP) the composition is skewed to pro residues. The chain crosses the membrane as a helical span at residues 202 to 218 (ATFFVVLFLIFVFVGFR).

As to quaternary structure, associates with the ATP synthase complex. Interacts with MT-ATP6; interaction is direct. Interacts with ATP5MC2; interaction is direct. In terms of tissue distribution, in brain, expressed in gray matter structures.

It is found in the mitochondrion inner membrane. Functionally, mitochondrial protein enriched in neurons that acts as a regulator of mitochondrial respiration. Associates with the ATP synthase complex and facilitates ATP synthesis. May be a chaperone protein involved in the turnover of the subunits of mitochondrial complex I N-module. It facilitates the degradation of N-module subunits damaged by oxidative stress, and contributes to complex I functional efficiency. This chain is DnaJ homolog subfamily C member 30, mitochondrial, found in Mus musculus (Mouse).